Reading from the N-terminus, the 317-residue chain is uncharacterized protein (317 aa).

Low complexity predominate over residues 68–78 (DSTNTDISNET). The tract at residues 68–87 (DSTNTDISNETPILSNNTPI) is disordered.

This is an uncharacterized protein from Methanocaldococcus jannaschii (strain ATCC 43067 / DSM 2661 / JAL-1 / JCM 10045 / NBRC 100440) (Methanococcus jannaschii).